Here is a 174-residue protein sequence, read N- to C-terminus: MKKSIFSKKLLVSFGSLVALASIPLIAISCGQTNTDKSQQPGSGSSTSGGQSGTGLGSGTTTGGQSGTTTGGRSGSGSSSSTTGGQTGTGSDSQDSGAKGTGSDSQDSGAKGTGSDSQDSGAKGTGSDSQDSGAKGTGSDSQDSGAKGTGSDSQDSGAKGTGSDSQDSGNGSTK.

An N-terminal signal peptide occupies residues 1–29 (MKKSIFSKKLLVSFGSLVALASIPLIAIS). Cys30 carries N-palmitoyl cysteine lipidation. Cys30 carries S-diacylglycerol cysteine lipidation. The disordered stretch occupies residues 32–174 (QTNTDKSQQP…SQDSGNGSTK (143 aa)). Residues 38–49 (SQQPGSGSSTSG) are compositionally biased toward low complexity. Residues 50–75 (GQSGTGLGSGTTTGGQSGTTTGGRSG) show a composition bias toward gly residues. Over residues 76-97 (SGSSSSTTGGQTGTGSDSQDSG) the composition is skewed to low complexity. A run of 7 repeats spans residues 88 to 99 (GTGSDSQDSGAK), 100 to 111 (GTGSDSQDSGAK), 112 to 123 (GTGSDSQDSGAK), 124 to 135 (GTGSDSQDSGAK), 136 to 147 (GTGSDSQDSGAK), 148 to 159 (GTGSDSQDSGAK), and 160 to 171 (GTGSDSQDSGNG). Residues 88–171 (GTGSDSQDSG…GSDSQDSGNG (84 aa)) are 7 X 12 AA tandem repeats. Positions 102 to 174 (GSDSQDSGAK…SQDSGNGSTK (73 aa)) are enriched in polar residues.

The protein localises to the cell membrane. Its function is as follows. Responsible for the antigenic diversity for host adaptation. This Mesomycoplasma hyorhinis (Mycoplasma hyorhinis) protein is Variant surface antigen B (vlpB).